A 273-amino-acid polypeptide reads, in one-letter code: SPRY domain-containing SOCS box protein 4 (273 aa).

Residues 34–233 (PARLDQLLDM…MRYINGLDPE (200 aa)) enclose the B30.2/SPRY domain. The SOCS box domain maps to 234–273 (PLPLMDLCRRSIRSALGRQRLRDIGSLPLPQSLKNYLQYQ).

Belongs to the SPSB family. In terms of assembly, component of the probable ECS(SPSB4) E3 ubiquitin-protein ligase complex which contains CUL5, RNF7/RBX2, Elongin BC complex and SPSB4. Interacts with CUL5; RNF7; ELOB and ELOC. Interacts with MET. Interacts (via B30.2/SPRY domain) with PAWR; this interaction occurs in association with the Elongin BC complex. Interacts with NOS2. Interacts with EPHB2.

It localises to the cytoplasm. It is found in the cytosol. It participates in protein modification; protein ubiquitination. Functionally, substrate recognition component of a SCF-like ECS (Elongin BC-CUL2/5-SOCS-box protein) E3 ubiquitin-protein ligase complex which mediates the ubiquitination and subsequent proteasomal degradation of target proteins. Negatively regulates nitric oxide (NO) production and limits cellular toxicity in activated macrophages by mediating the ubiquitination and proteasomal degradation of NOS2. Acts as a bridge which links NOS2 with the ECS E3 ubiquitin ligase complex components ELOC and CUL5. Diminishes EphB2-dependent cell repulsive responses by mediating the ubiquitination and degradation of the EphB2/CTF2. Regulates cellular clock function by mediating ubiquitination and proteasomal degradation of the circadian transcriptional repressor NR1D1. The chain is SPRY domain-containing SOCS box protein 4 (Spsb4) from Mus musculus (Mouse).